The chain runs to 255 residues: Cyclic di-GMP phosphodiesterase PdeH (255 aa).

The 243-residue stretch at 13 to 255 (EASIESLQER…ETLNTAVLAL (243 aa)) folds into the EAL domain.

It catalyses the reaction 3',3'-c-di-GMP + H2O = 5'-phosphoguanylyl(3'-&gt;5')guanosine + H(+). Functionally, involved in the control of the switch from cell motility to adhesion via regulation of cellular levels of cyclic-di-GMP (c-di-GMP). Part of a signaling cascade that regulates curli biosynthesis. The cascade is composed of two c-di-GMP control modules, in which c-di-GMP controlled by the DgcE/PdeH pair (module I) regulates the activity of the DgcM/PdeR pair (module II), which in turn regulates activity of the transcription factor MlrA and expression of the master biofilm regulator csgD. Effect on flagella is controlled via the c-di-GMP-binding flagellar brake protein YcgR. This chain is Cyclic di-GMP phosphodiesterase PdeH, found in Escherichia coli (strain K12).